Consider the following 419-residue polypeptide: Octopressin receptor (419 aa).

Residues Met1–Glu37 are Extracellular-facing. 2 N-linked (GlcNAc...) asparagine glycosylation sites follow: Asn3 and Asn22. The helical transmembrane segment at Ile38–Val58 threads the bilayer. The Cytoplasmic portion of the chain corresponds to Leu59–Asp80. Residues Ile81 to Leu101 form a helical membrane-spanning segment. The Extracellular segment spans residues Gly102–Arg108. An intrachain disulfide couples Cys107 to Cys182. The helical transmembrane segment at Val109–Ala129 threads the bilayer. The Cytoplasmic segment spans residues Leu130–Thr153. Residues Thr154 to Val174 traverse the membrane as a helical segment. Topologically, residues Asp175 to Asn192 are extracellular. A glycan (N-linked (GlcNAc...) asparagine) is linked at Asn185. The chain crosses the membrane as a helical span at residues Ile193–Phe213. Topologically, residues Phe214 to Lys292 are cytoplasmic. The interval Ser253 to Arg274 is disordered. Residues Asn259–Arg274 are compositionally biased toward basic and acidic residues. A helical membrane pass occupies residues Leu293–Met313. The Extracellular segment spans residues Ala314–Leu329. Residues Val330–Phe350 form a helical membrane-spanning segment. Residues Ser351 to Cys419 are Cytoplasmic-facing.

Belongs to the G-protein coupled receptor 1 family. Vasopressin/oxytocin receptor subfamily. Present in the nervous system and peripheral tissues.

The protein localises to the cell membrane. In terms of biological role, acts as a receptor for octopressin. In Octopus vulgaris (Common octopus), this protein is Octopressin receptor.